Reading from the N-terminus, the 35-residue chain is Kappa-theraphotoxin-Tb1c (35 aa).

Disulfide bonds link Cys3/Cys18, Cys10/Cys23, and Cys17/Cys30.

The protein belongs to the neurotoxin 10 (Hwtx-1) family. 59 (Tltx) subfamily. Monomer. Expressed by the venom gland.

The protein resides in the secreted. In terms of biological role, blocks Kv4.2/KCND2 voltage-gated potassium channels probably by shifting the voltage-dependence of channel activation to more depolarized potentials and by binding to the S3-S4 linker region of the voltage sensor domain. This Theraphosa blondi (Goliath birdeating spider) protein is Kappa-theraphotoxin-Tb1c.